A 1325-amino-acid polypeptide reads, in one-letter code: Clustered mitochondria protein homolog (1325 aa).

One can recognise a Clu domain in the interval 311 to 573 (PKHESDPMRT…RHTPMDVTWL (263 aa)). Disordered stretches follow at residues 893–937 (KHAE…PLRT), 1032–1063 (DSNQGSSSDGDRIGTNDAGSADGSKTEHDDQL), and 1245–1325 (QHAR…AKRS). Residues 1265–1275 (SAHHHHHRHLH) are compositionally biased toward basic residues. Low complexity predominate over residues 1276-1285 (QQQQNSSSSP). Residues 1314-1325 (AARKRAARAKRS) show a composition bias toward basic residues.

This sequence belongs to the CLU family. As to quaternary structure, may associate with the eukaryotic translation initiation factor 3 (eIF-3) complex.

It is found in the cytoplasm. Functionally, mRNA-binding protein involved in proper cytoplasmic distribution of mitochondria. The chain is Clustered mitochondria protein homolog from Malassezia globosa (strain ATCC MYA-4612 / CBS 7966) (Dandruff-associated fungus).